The chain runs to 562 residues: Abrin-c (562 aa).

An N-terminal signal peptide occupies residues 1 to 34 (MDKTLKLLILCLAWTCSFSALRCAARTYPPVATN). At glutamine 35 the chain carries Pyrrolidone carboxylic acid. Glutamate 198 is an active-site residue. Asparagine 234 carries N-linked (GlcNAc...) asparagine glycosylation. 3 disulfides stabilise this stretch: cysteine 281/cysteine 303, cysteine 320/cysteine 339, and cysteine 363/cysteine 380. Positions 307-434 (YEPTVRIGGR…YLMRQGWRTG (128 aa)) constitute a Ricin B-type lectin 1 domain. A 1-alpha repeat occupies 317–359 (DGMCVDVYDDGYHNGNRIIAWKCKDRLEENQLWTLKSDKTIRS). The 1-beta repeat unit spans residues 360-400 (NGKCLTTEGYAPGNYVMIYDCTSAVAEATYWEIWDNGTIIN). N-linked (GlcNAc...) asparagine glycosylation is found at asparagine 395 and asparagine 435. One copy of the 1-gamma repeat lies at 403-435 (SALVLSAESSSMGGTLTVQTNEYLMRQGWRTGN). Residues 437–561 (TSPFVTSISG…GKPNQIWLTL (125 aa)) form the Ricin B-type lectin 2 domain. One copy of the 2-alpha repeat lies at 448-483 (SDLCMQAQGSNVWLADCDNNKKEQQWALYTDGSIRS). Intrachain disulfides connect cysteine 451–cysteine 464 and cysteine 490–cysteine 507. A 2-beta repeat occupies 487-526 (TNNCLTSKDHKQGSPIVLMACSNGWASQRWLFKNDGSIYN). The stretch at 529-562 (DDMVMDVKRSDPSLKEIILHPYHGKPNQIWLTLF) is one 2-gamma repeat.

It in the N-terminal section; belongs to the ribosome-inactivating protein family. Type 2 RIP subfamily. Disulfide-linked dimer of A and B chains.

The enzyme catalyses Endohydrolysis of the N-glycosidic bond at one specific adenosine on the 28S rRNA.. Its function is as follows. The A chain is responsible for inhibiting protein synthesis through the catalytic inactivation of 60S ribosomal subunits by removing adenine from position 4,324 of 28S rRNA. Abrin-a is more toxic than ricin. In terms of biological role, the B chain is a galactose-specific lectin that facilitates the binding of abrin to the cell membrane that precedes endocytosis. The chain is Abrin-c from Abrus precatorius (Indian licorice).